A 425-amino-acid chain; its full sequence is Adenosylhomocysteinase (425 aa).

Residues Thr-60, Asp-132, and Glu-157 each coordinate substrate. NAD(+) is bound at residue 158–160 (TTT). Substrate is bound by residues Lys-187 and Asp-191. NAD(+)-binding positions include Asn-192, 221–226 (GYGWCG), Glu-244, Asn-279, 300–302 (SGH), and Asn-347.

This sequence belongs to the adenosylhomocysteinase family. It depends on NAD(+) as a cofactor.

It is found in the cytoplasm. It catalyses the reaction S-adenosyl-L-homocysteine + H2O = L-homocysteine + adenosine. It functions in the pathway amino-acid biosynthesis; L-homocysteine biosynthesis; L-homocysteine from S-adenosyl-L-homocysteine: step 1/1. Its function is as follows. May play a key role in the regulation of the intracellular concentration of adenosylhomocysteine. The chain is Adenosylhomocysteinase from Nostoc sp. (strain PCC 7120 / SAG 25.82 / UTEX 2576).